The following is a 475-amino-acid chain: Chromosomal replication initiator protein DnaA (475 aa).

Positions 1-73 (MSDTEQERWS…LSCWQAELPD (73 aa)) are domain I, interacts with DnaA modulators. Positions 73–131 (DVHRIDLTVRSAMRCAAPVREAPATDARHPERSEGRNGVELKTVATAPASANHDALGGS) are domain II. Residues 132 to 354 (PLDPRLTFQS…GAINRLLAHS (223 aa)) are domain III, AAA+ region. Residues Gly179, Gly181, Lys182, and Thr183 each contribute to the ATP site. Residues 355–475 (KLNAQPVTLE…VELLKRQLQE (121 aa)) form a domain IV, binds dsDNA region.

It belongs to the DnaA family. In terms of assembly, oligomerizes as a right-handed, spiral filament on DNA at oriC.

The protein resides in the cytoplasm. Plays an essential role in the initiation and regulation of chromosomal replication. ATP-DnaA binds to the origin of replication (oriC) to initiate formation of the DNA replication initiation complex once per cell cycle. Binds the DnaA box (a 9 base pair repeat at the origin) and separates the double-stranded (ds)DNA. Forms a right-handed helical filament on oriC DNA; dsDNA binds to the exterior of the filament while single-stranded (ss)DNA is stabiized in the filament's interior. The ATP-DnaA-oriC complex binds and stabilizes one strand of the AT-rich DNA unwinding element (DUE), permitting loading of DNA polymerase. After initiation quickly degrades to an ADP-DnaA complex that is not apt for DNA replication. Binds acidic phospholipids. This chain is Chromosomal replication initiator protein DnaA, found in Nitrobacter winogradskyi (strain ATCC 25391 / DSM 10237 / CIP 104748 / NCIMB 11846 / Nb-255).